A 362-amino-acid chain; its full sequence is MAFQFNFSIEEDLENKLTSLDDGTCVLKSQKGKEDKNQSTELPGLPQDRLWKCSSLGSAASSEDTDSPPSTADRSGVPEACEKQPSLKPAKEHVIPKDCDQVLENKVLEMLPGSQHVSTAVVKTISLKEKFPGENIVSQSFSSHSDLIPGVYEGGLKIWECTFDLMTYFTKAKVKFAGQKVLDLGCGSGLLGITASKGGAREVHFQDYNGLVIDEVTLPNVVANVPLQGDSNGINEPAGKRQRKSEVAQETCKCRLFSGEWAEFCKLVLSEKLFVKYDLILTSETIYNPDYYSTLHETLLRLLSRNGRVLLASKAHYFGVGGGVHLFQKFVEEKGVFETRTLEVIDEGLKRFLMEMTFKCPS.

A disordered region spans residues 28 to 89; sequence KSQKGKEDKN…ACEKQPSLKP (62 aa). The span at 55–73 shows a compositional bias: polar residues; it reads SLGSAASSEDTDSPPSTAD. Phosphoserine is present on residues Ser-62 and Ser-67. Tele-methylhistidine is present on His-144. S-adenosyl-L-methionine is bound by residues 158–162, Gly-185, and 206–208; these read IWECT and QDY. The Nuclear localization signal signature appears at 237–243; it reads PAGKRQR. Residues 259 to 261 and Ser-283 contribute to the S-adenosyl-L-methionine site; that span reads GEW.

Belongs to the methyltransferase superfamily. METTL18 family. In terms of assembly, interacts with GRWD1 and members of the heat shock protein 90 and 70 families; these proteins may possibly be methylation substrates for the enzyme. Monomethylated at His-144 through automethylation. Automethylation at His-144 positively regulates the methyltransferase activity toward RPL3. Probably methylated on other residues.

It is found in the cytoplasm. The protein resides in the cytosol. The protein localises to the nucleus. Its subcellular location is the nucleolus. The enzyme catalyses L-histidyl-[protein] + S-adenosyl-L-methionine = N(tele)-methyl-L-histidyl-[protein] + S-adenosyl-L-homocysteine + H(+). In terms of biological role, protein-L-histidine N-tele-methyltransferase that specifically monomethylates RPL3, thereby regulating translation elongation. Histidine methylation of RPL3 regulates translation elongation by slowing ribosome traversal on tyrosine codons: slower elongation provides enough time for proper folding of synthesized proteins and prevents cellular aggregation of tyrosine-rich proteins. The sequence is that of Histidine protein methyltransferase 1 homolog from Rattus norvegicus (Rat).